A 162-amino-acid polypeptide reads, in one-letter code: Phenazine biosynthesis protein PhzA2 (162 aa).

Belongs to the PhzA/PhzB family.

It functions in the pathway antibiotic biosynthesis; phenazine biosynthesis. Its function is as follows. Involved in the biosynthesis of the antibiotic phenazine, a nitrogen-containing heterocyclic molecule having important roles in virulence, competition and biological control. PhzA2 (operon phzA2B2C2E2F2G2) has a role in the biosynthesis of the phenazine during both planktonic growth and biofilm development, and in host infection during biofilm development. This Pseudomonas aeruginosa (strain ATCC 15692 / DSM 22644 / CIP 104116 / JCM 14847 / LMG 12228 / 1C / PRS 101 / PAO1) protein is Phenazine biosynthesis protein PhzA2.